The following is a 65-amino-acid chain: GDEEDEVEETLPVAEEGREKSCTTWRNSCMHNDKGCCFPWSCVCWSQTVSRNSSRKEKKCQCRLW.

Positions 1 to 18 (GDEEDEVEETLPVAEEGR) are excised as a propeptide. Intrachain disulfides connect Cys22–Cys37, Cys29–Cys42, Cys36–Cys62, and Cys44–Cys60.

It belongs to the neurotoxin omega-lctx family. Expressed by the venom gland.

Its subcellular location is the secreted. Its function is as follows. Modulates Cav2.1/CACNA1A voltage-gated calcium channels (P/Q-type currents) in rat cerebellar Purkinje cells and hippocampal CA1-CA3 neurons. At saturating concentrations (&gt;10 nM) decelerates activation kinetics and slightly increases peak amplitude without affecting deactivation kinetics. In vivo, does not cause death when intravenously injected into mice. In rat models, through its activity on Cav2.1/CACNA1A, has an ameliorative effect on memory defects provoked by hyperstimulation of N-methyl-D-aspartate receptors (NMDARs) in the hippocampus. This is Omega-lycotoxin-Am1f from Alopecosa marikovskyi (Wolf spider).